A 496-amino-acid polypeptide reads, in one-letter code: Transmembrane protein 104 (496 aa).

The Cytoplasmic segment spans residues 1-10 (MAGEITETGE). A helical membrane pass occupies residues 11–31 (LYSSYVGLVYMFNLIVGTGAL). Over 32–36 (TMPKA) the chain is Extracellular. A helical transmembrane segment spans residues 37 to 57 (FATAGWLVSLVLLVFLGFMSF). Over 58 to 146 (VTTTFVIEAM…SMFFNKVGVN (89 aa)) the chain is Cytoplasmic. The chain crosses the membrane as a helical span at residues 147–167 (LFYFCIIVYLYGDLAIYAAAV). The Extracellular portion of the chain corresponds to 168 to 204 (PFSLMQVTCSATGNDSCGVEADTKYNDTDRCWGPLRR). N-linked (GlcNAc...) asparagine glycosylation is present at N193. The chain crosses the membrane as a helical span at residues 205-225 (VDAYRIYLAIFTLLLGPFTFF). Residues 226-233 (DVQKTKYL) lie on the Cytoplasmic side of the membrane. The chain crosses the membrane as a helical span at residues 234-254 (QILTSLMRWIAFAVMIVLALI). At 255 to 276 (RIGHGQGEGHPPLADFSGVRNL) the chain is on the extracellular side. Residues 277–297 (FGVCVYSFMCQHSLPSLITPV) form a helical membrane-spanning segment. At 298–306 (SSKRHLTRL) the chain is on the cytoplasmic side. The chain crosses the membrane as a helical span at residues 307–327 (VFLDYVLILAFYGLLSFTAIF). The Extracellular segment spans residues 328 to 354 (CFRGDSLMDMYTLNFARCDVVGLAAVR). Residues 355–375 (FFLGLFPVFTISTNFPIIAVT) traverse the membrane as a helical segment. The Cytoplasmic segment spans residues 376–397 (LRNNWKTLFHREGGTYPWVVDR). A helical transmembrane segment spans residues 398-418 (VVFPTITLVPPVLVAFCTHDL). At 419-421 (ESL) the chain is on the extracellular side. The chain crosses the membrane as a helical span at residues 422–442 (VGITGAYAGTGIQYVIPAFLV). At 443-470 (YHCRRDTQLAFGCGVSNKHRSPFRHTFW) the chain is on the cytoplasmic side. Residues 471-491 (VGFVLLWAFSCFIFVTANIIL) traverse the membrane as a helical segment. Residues 492–496 (SETKL) lie on the Extracellular side of the membrane.

Belongs to the TMEM104 family.

The protein resides in the membrane. This is Transmembrane protein 104 (TMEM104) from Homo sapiens (Human).